Reading from the N-terminus, the 373-residue chain is mRNA export factor rae-1 (373 aa).

The residue at position 1 (M1) is an N-acetylmethionine. 4 WD repeats span residues 40 to 82 (APED…TFEG), 87 to 126 (NIPA…VAVV), 128 to 169 (THDG…NQTQ), and 276 to 315 (QEIY…KLKT).

It belongs to the WD repeat rae1 family. As to quaternary structure, the nuclear pore complex (NPC) constitutes the exclusive means of nucleocytoplasmic transport. NPCs allow the passive diffusion of ions and small molecules and the active, nuclear transport receptor-mediated bidirectional transport of macromolecules such as proteins, RNAs, ribonucleoparticles (RNPs), and ribosomal subunits across the nuclear envelope. Interacts with rpm-1. Expressed along the ventral and dorsal nerve cords.

The protein resides in the nucleus. Its subcellular location is the nuclear pore complex. It is found in the cell projection. The protein localises to the axon. It localises to the synapse. Functionally, functions as a component of the nuclear pore complex (NPC). NPC components, collectively referred to as nucleoporins (NUPs), can play the role of both NPC structural components and of docking or interaction partners for transiently associated nuclear transport factors. It is specifically important for nuclear mRNA export. Has a role in neuronal development, where it acts downstream of rpm-1 to control axon termination and synapse formation in anterior lateral microtubule (ALM) and posterior lateral microtubule (PLM) mechanosensory neurons. The chain is mRNA export factor rae-1 from Caenorhabditis elegans.